The following is a 271-amino-acid chain: Tryptophan synthase alpha chain (271 aa).

Active-site proton acceptor residues include E51 and D62.

Belongs to the TrpA family. As to quaternary structure, tetramer of two alpha and two beta chains.

The enzyme catalyses (1S,2R)-1-C-(indol-3-yl)glycerol 3-phosphate + L-serine = D-glyceraldehyde 3-phosphate + L-tryptophan + H2O. The protein operates within amino-acid biosynthesis; L-tryptophan biosynthesis; L-tryptophan from chorismate: step 5/5. The alpha subunit is responsible for the aldol cleavage of indoleglycerol phosphate to indole and glyceraldehyde 3-phosphate. In Prochlorococcus marinus (strain NATL2A), this protein is Tryptophan synthase alpha chain.